A 389-amino-acid chain; its full sequence is Succinyl-diaminopimelate desuccinylase (389 aa).

Zn(2+) is bound at residue His-75. Asp-77 is a catalytic residue. A Zn(2+)-binding site is contributed by Asp-108. Catalysis depends on Glu-142, which acts as the Proton acceptor. Zn(2+)-binding residues include Glu-143, Glu-171, and His-357.

This sequence belongs to the peptidase M20A family. DapE subfamily. As to quaternary structure, homodimer. Zn(2+) serves as cofactor. The cofactor is Co(2+).

The enzyme catalyses N-succinyl-(2S,6S)-2,6-diaminopimelate + H2O = (2S,6S)-2,6-diaminopimelate + succinate. The protein operates within amino-acid biosynthesis; L-lysine biosynthesis via DAP pathway; LL-2,6-diaminopimelate from (S)-tetrahydrodipicolinate (succinylase route): step 3/3. Functionally, catalyzes the hydrolysis of N-succinyl-L,L-diaminopimelic acid (SDAP), forming succinate and LL-2,6-diaminopimelate (DAP), an intermediate involved in the bacterial biosynthesis of lysine and meso-diaminopimelic acid, an essential component of bacterial cell walls. In Paracidovorax citrulli (strain AAC00-1) (Acidovorax citrulli), this protein is Succinyl-diaminopimelate desuccinylase.